The following is a 355-amino-acid chain: C-C chemokine receptor type 3 (355 aa).

Topologically, residues 1-34 are extracellular; sequence MTTSLDTVETFGPTSYDDDMGLLCEKADVGALIA. The helical transmembrane segment at 35–62 threads the bilayer; the sequence is QFVPPLYSLVFMVGLLGNVVVVMILIKY. The Cytoplasmic portion of the chain corresponds to 63-72; the sequence is RRLRIMTNIY. Residues 73-93 traverse the membrane as a helical segment; it reads LLNLAISDLLFLFTLPFWIHY. Residues 94 to 107 are Extracellular-facing; it reads VRERNWVFSHGMCK. Cysteine 106 and cysteine 183 form a disulfide bridge. A helical membrane pass occupies residues 108–129; sequence VLSGFYHTGLYSEIFFIILLTI. Residues 130-146 are Cytoplasmic-facing; sequence DRYLAIVHAVFALRART. A helical transmembrane segment spans residues 147 to 171; sequence VTFGVVTSIVTWGLAVLAALPEFIF. Residues 172–203 are Extracellular-facing; sequence YGTEELFPETLCSAIYPQDTVYSWRHFHTLRM. Residues 204 to 223 form a helical membrane-spanning segment; sequence TILCLALPLLVMAICYTGII. Residues 224-239 lie on the Cytoplasmic side of the membrane; the sequence is KTLLRCPSKKKYKAIR. A helical membrane pass occupies residues 240–264; it reads LIFVIMAVFFIFWTPYNVAILISTY. Residues 265 to 281 lie on the Extracellular side of the membrane; sequence QSILFGPDCERSKHLDL. A helical transmembrane segment spans residues 282–305; the sequence is FVLVTEVIAYSHCWVNPVIYAFVG. Residues 306–355 are Cytoplasmic-facing; sequence ERFRKYLRHFFHRHVLMHPGKYIPFLPSEKLERTSSVSPSTAEPELSIVF.

This sequence belongs to the G-protein coupled receptor 1 family.

The protein resides in the cell membrane. Its function is as follows. Receptor for C-C type chemokine. Binds and responds to a variety of chemokines, including CCL11, CCL26, CCL7, CCL13, RANTES(CCL5) and CCL15. Subsequently transduces a signal by increasing the intracellular calcium ions level. In addition acts as a possible functional receptor for NARS1. The chain is C-C chemokine receptor type 3 (CCR3) from Macaca fascicularis (Crab-eating macaque).